Consider the following 158-residue polypeptide: NAD(P)H-quinone oxidoreductase subunit J, chloroplastic (158 aa).

Belongs to the complex I 30 kDa subunit family. NDH is composed of at least 16 different subunits, 5 of which are encoded in the nucleus.

It is found in the plastid. The protein localises to the chloroplast thylakoid membrane. The enzyme catalyses a plastoquinone + NADH + (n+1) H(+)(in) = a plastoquinol + NAD(+) + n H(+)(out). It catalyses the reaction a plastoquinone + NADPH + (n+1) H(+)(in) = a plastoquinol + NADP(+) + n H(+)(out). Functionally, NDH shuttles electrons from NAD(P)H:plastoquinone, via FMN and iron-sulfur (Fe-S) centers, to quinones in the photosynthetic chain and possibly in a chloroplast respiratory chain. The immediate electron acceptor for the enzyme in this species is believed to be plastoquinone. Couples the redox reaction to proton translocation, and thus conserves the redox energy in a proton gradient. The sequence is that of NAD(P)H-quinone oxidoreductase subunit J, chloroplastic from Platanus occidentalis (Sycamore).